A 189-amino-acid polypeptide reads, in one-letter code: Ribulose bisphosphate carboxylase small subunit, chloroplastic (189 aa).

A chloroplast-targeting transit peptide spans 1–66 (MASSIMALSS…KTTSNGSRVR (66 aa)).

The protein belongs to the RuBisCO small chain family. In terms of assembly, heterohexadecamer of 8 large and 8 small subunits.

It is found in the plastid. Its subcellular location is the chloroplast. Its function is as follows. RuBisCO catalyzes two reactions: the carboxylation of D-ribulose 1,5-bisphosphate, the primary event in carbon dioxide fixation, as well as the oxidative fragmentation of the pentose substrate. Both reactions occur simultaneously and in competition at the same active site. Although the small subunit is not catalytic it is essential for maximal activity. The polypeptide is Ribulose bisphosphate carboxylase small subunit, chloroplastic (Larix laricina (Tamarack)).